The chain runs to 380 residues: Acyl-coenzyme A diphosphatase SCS3 (380 aa).

Residues 1-7 are Cytoplasmic-facing; sequence MSSKWFN. A helical membrane pass occupies residues 8–28; it reads AIHLLVCPLTVLVGYLMNAYG. At 29 to 43 the chain is on the lumenal side; sequence YGAALQATLNKDGLV. The helical transmembrane segment at 44 to 64 threads the bilayer; the sequence is NAMLVKKGWFWTSLVGWWCII. The Cytoplasmic portion of the chain corresponds to 65–88; it reads RYRAVPGATGRDRRHIVQSFKRYA. A helical transmembrane segment spans residues 89–109; the sequence is ILTVWWYVFTQGIWFGVGPIM. The Lumenal segment spans residues 110 to 233; it reads DLVFVYTGGH…GHWAGGHDPS (124 aa). A helical membrane pass occupies residues 234 to 254; that stretch reads GHVFLATLMCMFLLGELRVFG. Residue H235 is part of the active site. The Cytoplasmic portion of the chain corresponds to 255–325; sequence RRALAHLYAQ…LTRCIACDHP (71 aa). The chain crosses the membrane as a helical span at residues 326–346; the sequence is VIILLTLLVTWLWQLLLTAVA. Residues 347-356 lie on the Lumenal side of the membrane; it reads SRFHTVREHM. The active site involves H350. Residues 357-377 form a helical membrane-spanning segment; sequence SGLLAAYIVTGLVYARDAAAL. At 378-380 the chain is on the cytoplasmic side; that stretch reads RPV.

It belongs to the FIT family. Fungal FIT2B/SCS3 subfamily.

The protein resides in the endoplasmic reticulum membrane. It catalyses the reaction an acyl-CoA + H2O = an acyl-4'-phosphopantetheine + adenosine 3',5'-bisphosphate + 2 H(+). The catalysed reaction is (9Z)-octadecenoyl-CoA + H2O = S-(9Z-octadecenoyl)-4'-phosphopantetheine + adenosine 3',5'-bisphosphate + 2 H(+). It carries out the reaction (5Z,8Z,11Z,14Z)-eicosatetraenoyl-CoA + H2O = S-(5Z,8Z,11Z,14Z-eicosatetraenoyl)-4'-phosphopantetheine + adenosine 3',5'-bisphosphate + 2 H(+). The enzyme catalyses hexadecanoyl-CoA + H2O = S-hexadecanoyl-4'-phosphopantetheine + adenosine 3',5'-bisphosphate + 2 H(+). Fatty acyl-coenzyme A (CoA) diphosphatase that hydrolyzes fatty acyl-CoA to yield acyl-4'-phosphopantetheine and adenosine 3',5'-bisphosphate. Preferentially hydrolyzes unsaturated long-chain acyl-CoA substrates in the endoplasmic reticulum (ER) lumen. This catalytic activity is required for maintaining ER structure and for lipid droplets (LDs) biogenesis, which are lipid storage organelles involved in maintaining lipid and energy homeostasis. May directly bind to diacylglycerol (DAGs) and triacylglycerol, which is also important for LD biogenesis. May support directional budding of nacent LDs from the ER into the cytosol by reducing DAG levels at sites of LD formation. May play a role in the regulation of cell morphology and cytoskeletal organization. Involved in phospholipid biosynthesis. This chain is Acyl-coenzyme A diphosphatase SCS3, found in Saccharomyces cerevisiae (strain ATCC 204508 / S288c) (Baker's yeast).